The primary structure comprises 351 residues: MNSLANNNKLSTEDEEIHSARKRGYNEEQNYSEARKKQRDQGLLSQESNDGNIDSALLSEGATLKGTQSQYESGLTSNKDEKGSDDEDASVAEAAVAATVNYTDLIQGQEDSSDAHTSNQTNANGEHKDSLNGERAITPSNEGVKPNTSLEGMTSSPMESTQQSKNDMLIPLAEHDRGPEHQQDDEDNDDADIDLKKDISMQPGRRGRKPTTLATTDEWKKQRKDSHKEVERRRRENINTAINVLSDLLPVRESSKAAILACAAEYIQKLKETDEANIEKWTLQKLLSEQNASQLASANEKLQEELGNAYKEIEYMKRVLRKEGIEYEDMHTHKKQENERKSTRSDNPHEA.

Position 1 is an N-acetylmethionine (Met1). Polar residues-rich tracts occupy residues 1 to 10 (MNSLANNNKL), 43 to 52 (LLSQESNDGN), and 65 to 77 (KGTQ…GLTS). Disordered regions lie at residues 1-164 (MNSL…TQQS), 196-233 (KKDI…VERR), and 327-351 (YEDM…PHEA). At Ser45 the chain carries Phosphoserine; by ATM or ATR. Ser48 bears the Phosphoserine mark. The residue at position 84 (Ser84) is a Phosphoserine. 2 stretches are compositionally biased toward polar residues: residues 100 to 124 (VNYT…TNAN) and 138 to 164 (TPSN…TQQS). A Phosphothreonine modification is found at Thr138. In terms of domain architecture, bHLH spans 222-270 (QRKDSHKEVERRRRENINTAINVLSDLLPVRESSKAAILACAAEYIQKL).

In terms of assembly, binds DNA as a dimer. Associates with MET4 to form a heteromeric complex which also includes MET28.

The protein localises to the nucleus. Its subcellular location is the mitochondrion. It localises to the chromosome. The protein resides in the centromere. Functionally, required for chromosome stability and methionine prototrophy. It is involved in chromosomal segregation. Binds to a highly conserved DNA sequence (5'-RTCACRTG-3'), called CDEI, found in centromeres and in several promoters. DNA-binding activity is enhanced by MET28. Required as an auxiliary factor for transcriptional activation of sulfur metabolism together with MET4 and MET28. The sequence is that of Centromere-binding protein 1 (CBF1) from Saccharomyces cerevisiae (strain ATCC 204508 / S288c) (Baker's yeast).